The following is a 707-amino-acid chain: Signal transducer and activator of transcription A (707 aa).

A compositionally biased stretch (polar residues) spans 70-89 (LNQSDQFNLGRSNNLTPRTN). The disordered stretch occupies residues 70-246 (LNQSDQFNLG…GNPNLSSPQP (177 aa)). The segment covering 90-111 (QLQQLQQQQQQQQQPQQQQQQQ) has biased composition (low complexity). The segment covering 112–121 (TYGTQSPIHM) has biased composition (polar residues). Over residues 142–238 (QQSYNNNNSN…QQQQQQQQGN (97 aa)) the composition is skewed to low complexity. The stretch at 242 to 356 (SSPQPILDTI…IQSILNPQHS (115 aa)) forms a coiled coil. A DNA-binding region spans residues 443–487 (KFLAGTRKCSVNLKFGVNIRDLDNVTTTVESDASNPFVVITNECQ). The SH2 domain occupies 583 to 686 (WQEGIIYGYM…FLKLHKDTAL (104 aa)). Y702 is modified (phosphotyrosine).

This sequence belongs to the transcription factor STAT family. Monomer, in the absence of tyrosine phosphorylation. Homodimer, or heterodimer with another family member, when tyrosine phosphorylated. Post-translationally, tyrosine phosphorylated in response to cAMP. Not tyrosine phosphorylated in growing cells. Tyrosine phosphorylation is first detected at the tight mound stage, continues throughout the slug stage and early culmination, and starts to decrease at mid-culmination. Barely detectable in fruiting bodies.

It is found in the cytoplasm. The protein resides in the nucleus. Functionally, transcription factor that binds to 5'-TTGAATTGA-3' elements in the promoter region of target genes. Functions as a repressor of the ecmB gene. Regulates the differentiation of prestalk cells during development. The chain is Signal transducer and activator of transcription A (dstA) from Dictyostelium discoideum (Social amoeba).